The chain runs to 640 residues: Threonine--tRNA ligase (640 aa).

A TGS domain is found at 1-61 (MPIITLPNGD…TEDSTLQIIT (61 aa)). A catalytic region spans residues 242 to 533 (DHRKIGKALD…LIEHYAGFMP (292 aa)). Cysteine 333, histidine 384, and histidine 510 together coordinate Zn(2+).

The protein belongs to the class-II aminoacyl-tRNA synthetase family. In terms of assembly, homodimer. Zn(2+) serves as cofactor.

It is found in the cytoplasm. The enzyme catalyses tRNA(Thr) + L-threonine + ATP = L-threonyl-tRNA(Thr) + AMP + diphosphate + H(+). In terms of biological role, catalyzes the attachment of threonine to tRNA(Thr) in a two-step reaction: L-threonine is first activated by ATP to form Thr-AMP and then transferred to the acceptor end of tRNA(Thr). Also edits incorrectly charged L-seryl-tRNA(Thr). The protein is Threonine--tRNA ligase of Acinetobacter baumannii (strain AB0057).